A 401-amino-acid chain; its full sequence is L-rhamnonate dehydratase (401 aa).

Positions 29 and 55 each coordinate substrate. Mg(2+) contacts are provided by Asp222, Glu248, and Glu276. His325 serves as the catalytic Proton acceptor. Glu345 contacts substrate.

It belongs to the mandelate racemase/muconate lactonizing enzyme family. RhamD subfamily. Homooctamer; tetramer of dimers. It depends on Mg(2+) as a cofactor.

The catalysed reaction is L-rhamnonate = 2-dehydro-3-deoxy-L-rhamnonate + H2O. Its function is as follows. Catalyzes the dehydration of L-rhamnonate to 2-keto-3-deoxy-L-rhamnonate (KDR). This chain is L-rhamnonate dehydratase, found in Klebsiella pneumoniae subsp. pneumoniae (strain ATCC 700721 / MGH 78578).